A 212-amino-acid chain; its full sequence is NEDD4 family-interacting protein 1 (212 aa).

A compositionally biased stretch (polar residues) spans 1 to 14; the sequence is MSEQSSSSRYQQLQ. The interval 1-40 is disordered; sequence MSEQSSSSRYQQLQNEEEPGENAQASADAPPPYSSIAGES. The Cytoplasmic portion of the chain corresponds to 1 to 107; sequence MSEQSSSSRY…ADQLRIGNDG (107 aa). 2 short sequence motifs (PPxY motif) span residues 30–33 and 55–58; these read PPPY and PPSY. A helical membrane pass occupies residues 108-128; it reads IFMLTFFMAFLFNWIGFFLSF. At 129 to 134 the chain is on the extracellular side; it reads CLTSSA. Residues 135 to 155 traverse the membrane as a helical segment; sequence AGRYGAISGFGLSLIKWILIV. Residues 156 to 163 are Cytoplasmic-facing; sequence RFSTYFPG. The chain crosses the membrane as a helical span at residues 164-184; that stretch reads YFDGQYWLWWVFLVLGFLLFL. The Extracellular segment spans residues 185–212; sequence RGFINYAKVRKMPDNFSTLPRTRVLFIY.

The protein localises to the golgi apparatus membrane. In terms of biological role, may play a role in Golgi structure maintenance. In Xenopus laevis (African clawed frog), this protein is NEDD4 family-interacting protein 1 (ndfip1).